Consider the following 94-residue polypeptide: Cell division topological specificity factor (94 aa).

This sequence belongs to the MinE family.

Prevents the cell division inhibition by proteins MinC and MinD at internal division sites while permitting inhibition at polar sites. This ensures cell division at the proper site by restricting the formation of a division septum at the midpoint of the long axis of the cell. The chain is Cell division topological specificity factor from Hamiltonella defensa subsp. Acyrthosiphon pisum (strain 5AT).